Here is a 247-residue protein sequence, read N- to C-terminus: Eukaryotic translation initiation factor 6 (247 aa).

A phosphoserine; by CK1 mark is found at Ser-174 and Ser-175.

It belongs to the eIF-6 family. As to quaternary structure, monomer. Associates with the 60S ribosomal subunit. Phosphorylation at Ser-174 and Ser-175 promotes nuclear export.

The protein localises to the cytoplasm. It localises to the nucleus. The protein resides in the nucleolus. Functionally, binds to the 60S ribosomal subunit and prevents its association with the 40S ribosomal subunit to form the 80S initiation complex in the cytoplasm. Is also involved in ribosome biogenesis. Associates with pre-60S subunits in the nucleus and is involved in its nuclear export. This chain is Eukaryotic translation initiation factor 6 (tif6), found in Aspergillus oryzae (strain ATCC 42149 / RIB 40) (Yellow koji mold).